A 448-amino-acid chain; its full sequence is uncharacterized protein (448 aa).

Residues 19 to 41 (LGLLVPFLLLLFSCTNTVGYGVL) traverse the membrane as a helical segment. The region spanning 105–181 (YSYATSVLDG…CFSHGLSLFD (77 aa)) is the SH3b domain.

Its subcellular location is the membrane. This is an uncharacterized protein from Treponema pallidum (strain Nichols).